A 347-amino-acid polypeptide reads, in one-letter code: 4-hydroxy-2-oxovalerate aldolase 1 (347 aa).

In terms of domain architecture, Pyruvate carboxyltransferase spans 11–263 (VVLHDMCLRD…ETGVDLFKLM (253 aa)). 19-20 (RD) contributes to the substrate binding site. Aspartate 20 lines the Mn(2+) pocket. Residue histidine 23 is the Proton acceptor of the active site. Substrate-binding residues include serine 173 and histidine 202. The Mn(2+) site is built by histidine 202 and histidine 204. Position 293 (tyrosine 293) interacts with substrate.

Belongs to the 4-hydroxy-2-oxovalerate aldolase family.

The catalysed reaction is (S)-4-hydroxy-2-oxopentanoate = acetaldehyde + pyruvate. This chain is 4-hydroxy-2-oxovalerate aldolase 1 (lapG), found in Azoarcus sp. (strain BH72).